Consider the following 107-residue polypeptide: L-amino-acid oxidase (107 aa).

Position 35 to 38 (35 to 38 (GPMR)) interacts with FAD. 2 residues coordinate substrate: Arg-38 and His-49.

The protein belongs to the flavin monoamine oxidase family. FIG1 subfamily. Homodimer; non-covalently linked. The cofactor is FAD. N-glycosylated. Expressed by the venom gland.

It is found in the secreted. The catalysed reaction is an L-alpha-amino acid + O2 + H2O = a 2-oxocarboxylate + H2O2 + NH4(+). It catalyses the reaction L-leucine + O2 + H2O = 4-methyl-2-oxopentanoate + H2O2 + NH4(+). The enzyme catalyses L-phenylalanine + O2 + H2O = 3-phenylpyruvate + H2O2 + NH4(+). It carries out the reaction L-tryptophan + O2 + H2O = indole-3-pyruvate + H2O2 + NH4(+). The catalysed reaction is L-methionine + O2 + H2O = 4-methylsulfanyl-2-oxobutanoate + H2O2 + NH4(+). It catalyses the reaction L-isoleucine + O2 + H2O = (S)-3-methyl-2-oxopentanoate + H2O2 + NH4(+). The enzyme catalyses L-arginine + O2 + H2O = 5-guanidino-2-oxopentanoate + H2O2 + NH4(+). It carries out the reaction L-histidine + O2 + H2O = 3-(imidazol-5-yl)pyruvate + H2O2 + NH4(+). In terms of biological role, catalyzes an oxidative deamination of predominantly hydrophobic and aromatic L-amino acids, thus producing hydrogen peroxide that may contribute to the diverse toxic effects of this enzyme. Shows high activity on L-Met, moderate activity on L-Trp, L-Leu, L-His, L-Phe, L-Arg, L-Ile, low activity on L-Val, L-Glu, L-Lys, L-Gln, L-Asn, L-Tyr, L-Ala, and no activity on L-Asp, L-Ser, L-Pro, L-Gly, L-Thr and L-Cys. Shows antimicrobial activity inhibiting the growth of both Gram-negative and Gram-positive bacteria. Also inhibits platelet aggregation induced by ADP or collagen. Effects of snake L-amino oxidases on platelets are controversial, since they either induce aggregation or inhibit agonist-induced aggregation. These different effects are probably due to different experimental conditions. This protein may also induce hemorrhage, hemolysis, edema, apoptosis, and have antiparasitic activities. The chain is L-amino-acid oxidase from Macrovipera lebetinus (Levantine viper).